A 177-amino-acid chain; its full sequence is MTVDLYNYVATVENFPEPGVNFRDISPLMGDGVAYKQAVDAIADFAKDLNVDLIAGPESRGFIVGSPLAYALNIGFVPARKGGKLPRAAVSAAYSLEYGGENVLEIHQDAIKPGQRVLIVDDLLATGGTINATREIIEKLGGIVAGVAFIIELTDLHGREKIMQNGREVPFLTLMTY.

Belongs to the purine/pyrimidine phosphoribosyltransferase family. Homodimer.

Its subcellular location is the cytoplasm. The enzyme catalyses AMP + diphosphate = 5-phospho-alpha-D-ribose 1-diphosphate + adenine. Its pathway is purine metabolism; AMP biosynthesis via salvage pathway; AMP from adenine: step 1/1. Catalyzes a salvage reaction resulting in the formation of AMP, that is energically less costly than de novo synthesis. This chain is Adenine phosphoribosyltransferase, found in Leuconostoc citreum (strain KM20).